The sequence spans 186 residues: MASPAAASVRPPRPKKEPQTLVIPKNAAEEQKLKLERLMKNPDKAVPIPEKMNEWAPRAPPEFVRDVMGSSAGAGSGEFHVYRHLRRREYQRQDYMDAMAEKQKLDAEFQKRLEKNKIAAEEQTAKRRKKRQKLKEKKLLAKKMKLEQKKQKEEPSQCQEQHASSSDEASETEEEEEEPSVVIMGR.

An interaction with EIF2AK2 region spans residues 1–50; sequence MASPAAASVRPPRPKKEPQTLVIPKNAAEEQKLKLERLMKNPDKAVPIPE. The interval 51–143 is required for RNA-binding; that stretch reads KMNEWAPRAP…LKEKKLLAKK (93 aa). Positions 91–178 form a coiled coil; that stretch reads QRQDYMDAMA…ASETEEEEEE (88 aa). Residues 116-125 are compositionally biased toward basic and acidic residues; the sequence is NKIAAEEQTA. The interval 116 to 186 is disordered; sequence NKIAAEEQTA…EEPSVVIMGR (71 aa). The segment at 126 to 138 is required for nuclear localization; it reads KRRKKRQKLKEKK. The span at 126–143 shows a compositional bias: basic residues; sequence KRRKKRQKLKEKKLLAKK. The segment covering 144–155 has biased composition (basic and acidic residues); sequence MKLEQKKQKEEP. The segment covering 168–179 has biased composition (acidic residues); that stretch reads EASETEEEEEEP.

Belongs to the PRKRIP1 family. In terms of assembly, component of the pre-catalytic and post-catalytic spliceosome complexes. Interacts with EIF2AK2. In terms of tissue distribution, broadly expressed, with highest levels in liver, kidney, brain and heart.

It localises to the nucleus. The protein resides in the nucleolus. Its function is as follows. Required for pre-mRNA splicing as component of the spliceosome. Binds double-stranded RNA. Inhibits EIF2AK2 kinase activity. The polypeptide is PRKR-interacting protein 1 (Prkrip1) (Mus musculus (Mouse)).